The chain runs to 536 residues: Zinc finger protein 394 (536 aa).

Positions alanine 18–lysine 45 are disordered. A Glycyl lysine isopeptide (Lys-Gly) (interchain with G-Cter in SUMO2) cross-link involves residue lysine 20. Over residues proline 26 to glutamate 41 the composition is skewed to polar residues. The SCAN box domain maps to arginine 44–leucine 126. Residues alanine 135–serine 196 form the KRAB domain. Residues lysine 207 and lysine 260 each participate in a glycyl lysine isopeptide (Lys-Gly) (interchain with G-Cter in SUMO2) cross-link. C2H2-type zinc fingers lie at residues tyrosine 328–histidine 350, tyrosine 356–histidine 378, and tyrosine 384–histidine 406. The segment at cysteine 412–histidine 433 adopts a C2H2-type 4; atypical zinc-finger fold. Residue lysine 413 forms a Glycyl lysine isopeptide (Lys-Gly) (interchain with G-Cter in SUMO2) linkage. C2H2-type zinc fingers lie at residues histidine 439 to histidine 461, tyrosine 467 to histidine 489, and tyrosine 495 to histidine 517.

It belongs to the krueppel C2H2-type zinc-finger protein family.

The protein localises to the nucleus. Functionally, may be involved in transcriptional regulation. The sequence is that of Zinc finger protein 394 (Znf394) from Rattus norvegicus (Rat).